A 414-amino-acid chain; its full sequence is MSQANLSETLFKPRFKHPETSTLVRRFSAGKPQAMQSALSGNHVDHWYRLINRLMWIWRGVTPQEILDVQARIVMSEAERTDPELFDTVIGYRGGNWIFEWAKEAMQWQQKAGQEADPLLSGRHWLHASNLYSIAAYPHIKGDELAEQAQALANRAYEEAAQRLPGSLRELEFTIPGGSPITGFLHMPKGEGPFPTVLMCGGLDSLQTDYYNLYENYFSPLGIAMLTIDMPSIGFSSKWTLNQDTSLLHQHALRHLENVPWIDHTRVAAFGFRFGANIAVRLGYLEPQRLKAVACLGPVVHGLLVDPLHQGRVPEMYLDVLASRLGMHDASDEALRVELNRYSLKTQGLLGRRCPTPMLSGFWKDDPFSPEEESRLITSSSADGKLLEIPFNPVYRNFDHALRQIARWINHRFG.

It belongs to the FrsA family.

It carries out the reaction a carboxylic ester + H2O = an alcohol + a carboxylate + H(+). Functionally, catalyzes the hydrolysis of esters. The protein is Esterase FrsA of Klebsiella pneumoniae subsp. pneumoniae (strain ATCC 700721 / MGH 78578).